Reading from the N-terminus, the 235-residue chain is Small ribosomal subunit protein eS4 (235 aa).

An S4 RNA-binding domain is found at 37–110; the sequence is LPLGLIIRDV…KGRLVLYKLN (74 aa).

The protein belongs to the eukaryotic ribosomal protein eS4 family.

This is Small ribosomal subunit protein eS4 from Methanosarcina mazei (strain ATCC BAA-159 / DSM 3647 / Goe1 / Go1 / JCM 11833 / OCM 88) (Methanosarcina frisia).